The primary structure comprises 169 residues: NADH-quinone oxidoreductase subunit B (169 aa).

[4Fe-4S] cluster-binding residues include Cys42, Cys43, Cys107, and Cys136.

Belongs to the complex I 20 kDa subunit family. NDH-1 is composed of 14 different subunits. Subunits NuoB, C, D, E, F, and G constitute the peripheral sector of the complex. Requires [4Fe-4S] cluster as cofactor.

The protein localises to the cell inner membrane. It catalyses the reaction a quinone + NADH + 5 H(+)(in) = a quinol + NAD(+) + 4 H(+)(out). In terms of biological role, NDH-1 shuttles electrons from NADH, via FMN and iron-sulfur (Fe-S) centers, to quinones in the respiratory chain. The immediate electron acceptor for the enzyme in this species is believed to be ubiquinone. Couples the redox reaction to proton translocation (for every two electrons transferred, four hydrogen ions are translocated across the cytoplasmic membrane), and thus conserves the redox energy in a proton gradient. This chain is NADH-quinone oxidoreductase subunit B, found in Nitratiruptor sp. (strain SB155-2).